The sequence spans 845 residues: G-type lectin S-receptor-like serine/threonine-protein kinase At1g11410 (845 aa).

The signal sequence occupies residues 1–21; the sequence is MKFFFIFFIFLFSFLIQSCYS. Residues 22–147 form the Bulb-type lectin domain; that stretch reads DNTILRSQSL…VTGKSFWESF (126 aa). Residues 22–441 are Extracellular-facing; that stretch reads DNTILRSQSL…NGNGASGKKR (420 aa). Residues Asn82, Asn103, Asn185, Asn231, and Asn259 are each glycosylated (N-linked (GlcNAc...) asparagine). An EGF-like domain is found at 283 to 321; sequence PEDKCDIYNHCGFNGYCDSTSTEKFECSCLPGYEPKTPR. Intrachain disulfides connect Cys287/Cys299 and Cys293/Cys309. The 84-residue stretch at 341-424 folds into the PAN domain; that stretch reads CNGKEGFAKL…SGQDFYLRVD (84 aa). Residues Asn357, Asn366, and Asn379 are each glycosylated (N-linked (GlcNAc...) asparagine). Intrachain disulfides connect Cys372–Cys399 and Cys376–Cys382. Residues 442-462 traverse the membrane as a helical segment; the sequence is LVLILISLIAVVMLLLISFHC. Residues 463-845 lie on the Cytoplasmic side of the membrane; sequence YLRKRRQRTQ…DVTLTDVQGR (383 aa). The 286-residue stretch at 523-808 folds into the Protein kinase domain; it reads FAFQNKLGAG…DLPSPKHPAF (286 aa). Residues 529–537 and Lys551 each bind ATP; that span reads LGAGGFGPV. The interval 612–629 is caM-binding; the sequence is EQRAELDWPKRMGIIRGI. Asp648 functions as the Proton acceptor in the catalytic mechanism. The segment at 803–845 is disordered; that stretch reads PKHPAFTAGRRRNTKTGGSSDNWPSGETSSTINDVTLTDVQGR. Polar residues predominate over residues 817-845; it reads KTGGSSDNWPSGETSSTINDVTLTDVQGR.

It belongs to the protein kinase superfamily. Ser/Thr protein kinase family.

The protein localises to the cell membrane. It carries out the reaction L-seryl-[protein] + ATP = O-phospho-L-seryl-[protein] + ADP + H(+). The catalysed reaction is L-threonyl-[protein] + ATP = O-phospho-L-threonyl-[protein] + ADP + H(+). This chain is G-type lectin S-receptor-like serine/threonine-protein kinase At1g11410, found in Arabidopsis thaliana (Mouse-ear cress).